A 122-amino-acid polypeptide reads, in one-letter code: Small ribosomal subunit protein bS6 (122 aa).

This sequence belongs to the bacterial ribosomal protein bS6 family.

Binds together with bS18 to 16S ribosomal RNA. This chain is Small ribosomal subunit protein bS6, found in Vibrio cholerae serotype O1 (strain ATCC 39541 / Classical Ogawa 395 / O395).